The chain runs to 252 residues: Imidazole glycerol phosphate synthase subunit HisF (252 aa).

Residues Asp11 and Asp130 contribute to the active site.

Belongs to the HisA/HisF family. As to quaternary structure, heterodimer of HisH and HisF.

Its subcellular location is the cytoplasm. It catalyses the reaction 5-[(5-phospho-1-deoxy-D-ribulos-1-ylimino)methylamino]-1-(5-phospho-beta-D-ribosyl)imidazole-4-carboxamide + L-glutamine = D-erythro-1-(imidazol-4-yl)glycerol 3-phosphate + 5-amino-1-(5-phospho-beta-D-ribosyl)imidazole-4-carboxamide + L-glutamate + H(+). Its pathway is amino-acid biosynthesis; L-histidine biosynthesis; L-histidine from 5-phospho-alpha-D-ribose 1-diphosphate: step 5/9. IGPS catalyzes the conversion of PRFAR and glutamine to IGP, AICAR and glutamate. The HisF subunit catalyzes the cyclization activity that produces IGP and AICAR from PRFAR using the ammonia provided by the HisH subunit. The protein is Imidazole glycerol phosphate synthase subunit HisF of Hydrogenobaculum sp. (strain Y04AAS1).